A 466-amino-acid polypeptide reads, in one-letter code: Tyrosinase HcTyr1 (466 aa).

Positions 43, 78, 87, 211, 215, and 238 each coordinate Cu cation.

It belongs to the tyrosinase family. In terms of assembly, monomer. Formation of a dimer is observed when the protein is in its holo-form. It depends on Cu(2+) as a cofactor. Post-translationally, in vitro, the C-terminal lid-domain is slowly cleaved off in an autoprocessive time dependent manner, leading to the formation of cleaved-HcTyr1. The processing rate is not influenced by factors such as pH and added metal ions.

The catalysed reaction is L-tyrosine + O2 = L-dopaquinone + H2O. The enzyme catalyses 2 L-tyrosine + O2 = 2 L-dopa. It carries out the reaction 2 L-dopa + O2 = 2 L-dopaquinone + 2 H2O. Cleavage of the lid-domain increases activity levels, affinity for substrate and turnover rate. Exhibits high saline tolerance. Functionally, copper-containing oxidase that catalyzes the conversion of L-tyrosine to L-dopa and then to L-dopaquinone. Can use various phenols such as p-coumaric acid, phenol, pyrocatechol, syringol or pyrogallol. Accepts several of the constituents of lignin and potentially participates in lignin functionalization. In Hahella sp. (strain CCB-MM4), this protein is Tyrosinase HcTyr1.